The sequence spans 407 residues: Argininosuccinate synthase (407 aa).

Residues 10–18 (AYSGGLDTS) and Ala-37 contribute to the ATP site. L-citrulline contacts are provided by Tyr-90 and Ser-95. Residue Gly-120 coordinates ATP. Residues Thr-122, Asn-126, and Asp-127 each coordinate L-aspartate. Position 126 (Asn-126) interacts with L-citrulline. 5 residues coordinate L-citrulline: Arg-130, Ser-181, Ser-190, Glu-266, and Tyr-278.

This sequence belongs to the argininosuccinate synthase family. Type 1 subfamily. Homotetramer.

The protein localises to the cytoplasm. The enzyme catalyses L-citrulline + L-aspartate + ATP = 2-(N(omega)-L-arginino)succinate + AMP + diphosphate + H(+). Its pathway is amino-acid biosynthesis; L-arginine biosynthesis; L-arginine from L-ornithine and carbamoyl phosphate: step 2/3. The polypeptide is Argininosuccinate synthase (Ruegeria sp. (strain TM1040) (Silicibacter sp.)).